Consider the following 236-residue polypeptide: DNA repair protein RecO (236 aa).

This sequence belongs to the RecO family.

In terms of biological role, involved in DNA repair and RecF pathway recombination. The protein is DNA repair protein RecO of Photobacterium profundum (strain SS9).